Consider the following 188-residue polypeptide: Elongation factor P (188 aa).

An N6-(3,6-diaminohexanoyl)-5-hydroxylysine modification is found at K34.

This sequence belongs to the elongation factor P family. May be beta-lysylated on the epsilon-amino group of Lys-34 by the combined action of EpmA and EpmB, and then hydroxylated on the C5 position of the same residue by EpmC (if this protein is present). Lysylation is critical for the stimulatory effect of EF-P on peptide-bond formation. The lysylation moiety may extend toward the peptidyltransferase center and stabilize the terminal 3-CCA end of the tRNA. Hydroxylation of the C5 position on Lys-34 may allow additional potential stabilizing hydrogen-bond interactions with the P-tRNA.

It localises to the cytoplasm. It participates in protein biosynthesis; polypeptide chain elongation. Its function is as follows. Involved in peptide bond synthesis. Alleviates ribosome stalling that occurs when 3 or more consecutive Pro residues or the sequence PPG is present in a protein, possibly by augmenting the peptidyl transferase activity of the ribosome. Modification of Lys-34 is required for alleviation. This Enterobacter sp. (strain 638) protein is Elongation factor P.